The following is a 193-amino-acid chain: Transcriptional activator GvpE2 (193 aa).

A DNA-binding site is contributed by 143–148 (KRKVYR). Residues 153-184 (QAAIEHVDSVVLQLLTFAVGLQTIMADCIVNQ) are leucine-zipper.

Homodimer. Interacts with endogenous GvpD, also with GvpD from H.mediterranei.

It localises to the cytoplasm. Degraded once GvpD is translated; degradation requires 'Arg-494' of GvpD; tested in transgenic H.volcanii. Fusion of green fluorescent protein to its C-terminus partially protects it from degradation. Plays a regulatory role in gas vesicle synthesis, required to activate transcription of the c-gvpA operon. Gas vesicles are hollow, gas filled proteinaceous nanostructures found in several microbial planktonic microorganisms. They allow positioning of halobacteria at the optimal depth for growth in the poorly aerated, shallow brine pools of their habitat. Its function is as follows. Expression of 2 c-vac DNA fragments containing 2 divergently transcribed regions (gvpE-gvpF-gvpG-gvpH-gvpI-gvpJ-gvpK-gvpL-gvpM and gvpA-gvpC-gvpN-gvpO) allows H.volcanii to produce gas vesicles. All site-directed mutagenesis is tested in H.volcanii. This Halobacterium salinarum (strain ATCC 700922 / JCM 11081 / NRC-1) (Halobacterium halobium) protein is Transcriptional activator GvpE2.